The chain runs to 206 residues: Putative precorrin-2 dehydrogenase (206 aa).

Residues 20–21 and 41–46 contribute to the NAD(+) site; these read SV and KEFDEE.

The protein belongs to the precorrin-2 dehydrogenase / sirohydrochlorin ferrochelatase family. In terms of assembly, homodimer.

The catalysed reaction is precorrin-2 + NAD(+) = sirohydrochlorin + NADH + 2 H(+). It participates in porphyrin-containing compound metabolism; siroheme biosynthesis; sirohydrochlorin from precorrin-2: step 1/1. Involved in the archaeal biosynthesis of heme. Catalyzes the oxiation of precorrin-2 into sirohydroclorin. The chain is Putative precorrin-2 dehydrogenase from Methanocaldococcus jannaschii (strain ATCC 43067 / DSM 2661 / JAL-1 / JCM 10045 / NBRC 100440) (Methanococcus jannaschii).